The primary structure comprises 556 residues: 2-succinyl-5-enolpyruvyl-6-hydroxy-3-cyclohexene-1-carboxylate synthase (556 aa).

It belongs to the TPP enzyme family. MenD subfamily. Homodimer. Mg(2+) serves as cofactor. It depends on Mn(2+) as a cofactor. Thiamine diphosphate is required as a cofactor.

The catalysed reaction is isochorismate + 2-oxoglutarate + H(+) = 5-enolpyruvoyl-6-hydroxy-2-succinyl-cyclohex-3-ene-1-carboxylate + CO2. The protein operates within quinol/quinone metabolism; 1,4-dihydroxy-2-naphthoate biosynthesis; 1,4-dihydroxy-2-naphthoate from chorismate: step 2/7. It functions in the pathway quinol/quinone metabolism; menaquinone biosynthesis. Catalyzes the thiamine diphosphate-dependent decarboxylation of 2-oxoglutarate and the subsequent addition of the resulting succinic semialdehyde-thiamine pyrophosphate anion to isochorismate to yield 2-succinyl-5-enolpyruvyl-6-hydroxy-3-cyclohexene-1-carboxylate (SEPHCHC). This is 2-succinyl-5-enolpyruvyl-6-hydroxy-3-cyclohexene-1-carboxylate synthase from Escherichia coli (strain K12 / MC4100 / BW2952).